The primary structure comprises 3014 residues: Cadherin EGF LAG seven-pass G-type receptor 1 (3014 aa).

The first 20 residues, 1-20 (MAPPPPPVLPVLLLLAAAAA), serve as a signal peptide directing secretion. The Extracellular portion of the chain corresponds to 22–2469 (PAMGLRAAAW…RENGEVLPLK (2448 aa)). The tract at residues 205–242 (AGTPSASPSPSPPLPPNLPEARAGPARRARRGTSGRGS) is disordered. Pro residues predominate over residues 211–222 (SPSPSPPLPPNL). Cadherin domains lie at 246-353 (PMPN…SPVF), 354-459 (EQSE…YPQF), 460-565 (SEQN…EPIF), 566-687 (VSSP…DPVF), 688-789 (TQPT…RPVF), 790-892 (QSSH…APQF), 893-999 (LWDF…APMF), 1000-1101 (EKDE…PPVL), and 1106-1224 (ILFN…SPLL). Asn-403, Asn-546, Asn-634, and Asn-778 each carry an N-linked (GlcNAc...) asparagine glycan. N-linked (GlcNAc...) asparagine glycans are attached at residues Asn-1114, Asn-1139, Asn-1213, Asn-1249, Asn-1259, and Asn-1287. Positions 1303–1361 (DDNICLREPCENYMKCVSVLRFDSSAPFLSSTTVLFRPIHPINGLRCRCPPGFTGDYCE) constitute an EGF-like 1; calcium-binding domain. 9 disulfide bridges follow: Cys-1307–Cys-1318, Cys-1312–Cys-1349, Cys-1351–Cys-1360, Cys-1367–Cys-1378, Cys-1372–Cys-1387, Cys-1389–Cys-1398, Cys-1407–Cys-1418, Cys-1412–Cys-1428, and Cys-1430–Cys-1440. Positions 1363–1399 (EIDLCYSDPCGANGRCRSREGGYTCECFEDFTGEHCE) constitute an EGF-like 2; calcium-binding domain. In terms of domain architecture, EGF-like 3; calcium-binding spans 1403 to 1441 (RSGRCANGVCKNGGTCVNLLIGGFHCVCPPGEYERPYCE). The Laminin G-like 1 domain occupies 1442–1646 (VTTRSFPPQS…IANNGTREGC (205 aa)). 3 N-linked (GlcNAc...) asparagine glycosylation sites follow: Asn-1576, Asn-1623, and Asn-1640. Cystine bridges form between Cys-1620-Cys-1646, Cys-1653-Cys-1664, Cys-1658-Cys-1673, Cys-1675-Cys-1684, Cys-1840-Cys-1870, Cys-1876-Cys-1887, Cys-1881-Cys-1896, Cys-1898-Cys-1907, Cys-1911-Cys-1922, Cys-1916-Cys-1934, Cys-1936-Cys-1945, Cys-1953-Cys-1966, and Cys-1968-Cys-1978. The 37-residue stretch at 1649-1685 (RRNFCDGRRCQNGGTCVNRWNMYLCECPLRFGGKNCE) folds into the EGF-like 4; calcium-binding domain. A (3R)-3-hydroxyasparagine modification is found at Asn-1666. One can recognise a Laminin G-like 2 domain in the interval 1689–1870 (PHPQLFSGES…ALKVRVKDGC (182 aa)). The region spanning 1872–1907 (VDDPCTSSPCPPNSRCHDAWEDYSCVCDKGYLGINC) is the EGF-like 5; calcium-binding domain. Asp-1889 is modified ((3R)-3-hydroxyaspartate). One can recognise an EGF-like 6; calcium-binding domain in the interval 1908-1946 (VDACHLNPCENMGACVRSPGSPQGYVCECGPSHYGPYCE). The region spanning 1947-1979 (NKLDLPCPRGWWGNPVCGPCHCAVSKGFDPDCN) is the EGF-like 7; calcium-binding domain. Asn-1979 carries an N-linked (GlcNAc...) asparagine glycan. The EGF-like 8; calcium-binding domain maps to 1981-2016 (TNGQCQCKENYYKLLAQDTCLPCDCFPHGSHSRTCD). Cystine bridges form between Cys-1985/Cys-2000, Cys-1987/Cys-2003, Cys-2005/Cys-2015, Cys-2024/Cys-2033, and Cys-2036/Cys-2048. A Laminin EGF-like domain is found at 2003–2050 (CDCFPHGSHSRTCDMATGQCACKPGVIGRQCNRCDNPFAEVTTLGCEV). N-linked (GlcNAc...) asparagine glycosylation is found at Asn-2103, Asn-2122, and Asn-2257. A disordered region spans residues 2291 to 2328 (PEEKEGPLLRPAGRRTTPQTTRPGPGTEREAPISRRRR). In terms of domain architecture, GAIN-B spans 2297 to 2461 (PLLRPAGRRT…AVLMDISRRE (165 aa)). Positions 2300–2316 (RPAGRRTTPQTTRPGPG) are enriched in low complexity. Cystine bridges form between Cys-2411/Cys-2443 and Cys-2431/Cys-2445. The GPS stretch occupies residues 2411–2461 (CVFWNHSLAVGGTGGWSARGCELLSRNRTHVACQCSHTASFAVLMDISRRE). Asn-2415 and Asn-2437 each carry an N-linked (GlcNAc...) asparagine glycan. The chain crosses the membrane as a helical span at residues 2470-2490 (IVTYAAVSLSLAALLVAFVLL). Topologically, residues 2491 to 2501 (SLVRMLRSNLH) are cytoplasmic. The chain crosses the membrane as a helical span at residues 2502 to 2522 (SIHKHLAVALFLSQLVFVIGI). N-linked (GlcNAc...) asparagine glycosylation is present at Asn-2523. Over 2523–2527 (NQTEN) the chain is Extracellular. The helical transmembrane segment at 2528 to 2548 (PFLCTVVAILLHYIYMSTFAW) threads the bilayer. Over 2549–2572 (TLVESLHVYRMLTEVRNIDTGPMR) the chain is Cytoplasmic. A helical membrane pass occupies residues 2573–2593 (FYYVVGWGIPAIVTGLAVGLD). Residues 2594 to 2611 (PQGYGNPDFCWLSLQDTL) lie on the Extracellular side of the membrane. Residues 2612–2632 (IWSFAGPIGAVIIINTVTSVL) traverse the membrane as a helical segment. Residues 2633–2655 (SAKVSCQRKHHYYGKKGIVSLLR) are Cytoplasmic-facing. The chain crosses the membrane as a helical span at residues 2656 to 2676 (TAFLLLLLISATWLLGLLAVN). At 2677–2683 (RDALSFH) the chain is on the extracellular side. Residues 2684-2704 (YLFAIFSGLQGPFVLLFHCVL) form a helical membrane-spanning segment. Residues 2705-3014 (NQEVRKHLKG…QADGSDSEKP (310 aa)) lie on the Cytoplasmic side of the membrane. 2 positions are modified to phosphoserine: Ser-2761 and Ser-2764. Disordered stretches follow at residues 2777–2939 (SSGL…PPPL) and 2954–3014 (LADC…SEKP). The span at 2796–2806 (SCKDPPGHDSD) shows a compositional bias: basic and acidic residues. The segment covering 2814–2825 (DEQSSSYASSHS) has biased composition (low complexity). 2 positions are modified to phosphoserine: Ser-2871 and Ser-2873. Over residues 2876 to 2904 (PSGKPRLKVETKVSVELHREEQGSHRGEY) the composition is skewed to basic and acidic residues. Low complexity predominate over residues 2960–2969 (SPTSSRTSSL). Residues 2983-2992 (PGREPGRDHL) are compositionally biased toward basic and acidic residues.

Belongs to the G-protein coupled receptor 2 family. LN-TM7 subfamily. In terms of processing, the iron and 2-oxoglutarate dependent 3-hydroxylation of aspartate and asparagine is (R) stereospecific within EGF domains.

The protein resides in the cell membrane. Functionally, receptor that may have an important role in cell/cell signaling during nervous system formation. The protein is Cadherin EGF LAG seven-pass G-type receptor 1 (CELSR1) of Homo sapiens (Human).